Reading from the N-terminus, the 1407-residue chain is MKDLLKFLKAQTKTEEFDAIKIALASPDMIRSWSFGEVKKPETINYRTFKPERDGLFCARIFGPVKDYECLCGKYKRLKHRGVICEKCGVEVTQTKVRRERMGHIELASPTAHIWFLKSLPSRIGLLLDMPLRDIERVLYFESYVVVEGGMTNLERRQILTEEQYLDALEEFGDEFDAKMGAEAIQALLKNMDLEQECEQLREELTETNSETKRKKLTKRIKLLEAFVQSGNKPEWMILTVLPVLPPDLRPLVPLDGGRFATSDLNDLYRRVINRNNRLKRLLDLAAPDIIVRNEKRMLQEAVDALLDNGRRGRAITGSNKRPLKSLADMIKGKQGRFRQNLLGKRVDYSGRSVITVGPYLRLHQCGLPKKMALELFKPFIYGKLELRGLATTIKAAKKMVEREEAVVWDILDEVIREHPVLLNRAPTLHRLGIQAFEPVLIEGKAIQLHPLVCAAYNADFDGDQMAVHVPLTLEAQLEARALMMSTNNILSPANGEPIIVPSQDVVLGLYYMTRDCVNAKGEGMVLTGPKEAERVYRAGLASLHARVKVRITEEIKSIEGDVTHQTSIIDTTIGRAILWMIVPKGLPFSIVNQPLGKKAISKMLNTCYRILGLKPTVIFADQTMYTGFAYAARSGASVGIDDMVIPAKKAEIIEEAETEVAEIQEQFQSGLVTAGERYNKVIDIWAAANERVAKAMMENLSVEDVVNRDGVVEQQVSFNSIFMMADSGARGSAAQIRQLAGMRGLMAKPDGSIIETPITANFREGLNVLQYFISTHGARKGLADTALKTANSGYLTRRLVDVAQDLVVTEDDCGTHEGIMMTPVIEGGDVKEPLRERVLGRVTAEDVIKPGTADILVPRNTLLNEQWCDMLEENSVDVVKVRSVVSCQTDFGVCANCYGRDLARGHIINKGEAIGVIAAQSIGEPGTQLTMRTFHIGGAASRAAAESSIQVKNKGSLKLNNVKFVMNGNGKLVITSRNTELKLIDEFGRTKESYKVPYGAVMAKGDGSDVSGGETVANWDPHTMPVVTEVSGFIRFADMIDGQTITRQTDDLTGLSSIVVLDSAERTGSGKDLRPALKIVDAKGQDVLIPGTDMPAQYFLPGKTIVQLEDGVQIGAGDTLARLPQESSGTKDITGGLPRVADLFEARRPKEPAILAEISGIISFGKETKGKRRLVISPLDGSDAYEEMIPKWRQLNVFEGEVVERGDVVSDGPESPHDILRLRGVHAVTRYITNEVQEVYRLQGVKINDKHIEVIVRQMLRKGTIVSAGSTEFLEGEQAEMSRIKIANRKLEADGKITATFSRDLLGITKASLATESFISAASFQETTRVLTEAAVAGKRDELRGLKENVIVGRLIPAGTGYAYHQDRMRRRQASEAPVVPQVSADEASANMAELLNAGFGKRDDE.

Cysteine 70, cysteine 72, cysteine 85, and cysteine 88 together coordinate Zn(2+). Mg(2+) contacts are provided by aspartate 460, aspartate 462, and aspartate 464. Cysteine 814, cysteine 888, cysteine 895, and cysteine 898 together coordinate Zn(2+).

Belongs to the RNA polymerase beta' chain family. The RNAP catalytic core consists of 2 alpha, 1 beta, 1 beta' and 1 omega subunit. When a sigma factor is associated with the core the holoenzyme is formed, which can initiate transcription. Requires Mg(2+) as cofactor. It depends on Zn(2+) as a cofactor.

The catalysed reaction is RNA(n) + a ribonucleoside 5'-triphosphate = RNA(n+1) + diphosphate. Functionally, DNA-dependent RNA polymerase catalyzes the transcription of DNA into RNA using the four ribonucleoside triphosphates as substrates. This Pectobacterium atrosepticum (strain SCRI 1043 / ATCC BAA-672) (Erwinia carotovora subsp. atroseptica) protein is DNA-directed RNA polymerase subunit beta'.